The following is a 245-amino-acid chain: tRNA pseudouridine synthase A (245 aa).

The active-site Nucleophile is the Asp-52. Tyr-111 is a substrate binding site.

This sequence belongs to the tRNA pseudouridine synthase TruA family. As to quaternary structure, homodimer.

The enzyme catalyses uridine(38/39/40) in tRNA = pseudouridine(38/39/40) in tRNA. In terms of biological role, formation of pseudouridine at positions 38, 39 and 40 in the anticodon stem and loop of transfer RNAs. The sequence is that of tRNA pseudouridine synthase A from Rickettsia felis (strain ATCC VR-1525 / URRWXCal2) (Rickettsia azadi).